We begin with the raw amino-acid sequence, 237 residues long: 1-(5-phosphoribosyl)-5-[(5-phosphoribosylamino)methylideneamino] imidazole-4-carboxamide isomerase (237 aa).

Asp8 acts as the Proton acceptor in catalysis. Catalysis depends on Asp129, which acts as the Proton donor.

Belongs to the HisA/HisF family.

It localises to the cytoplasm. The enzyme catalyses 1-(5-phospho-beta-D-ribosyl)-5-[(5-phospho-beta-D-ribosylamino)methylideneamino]imidazole-4-carboxamide = 5-[(5-phospho-1-deoxy-D-ribulos-1-ylimino)methylamino]-1-(5-phospho-beta-D-ribosyl)imidazole-4-carboxamide. The protein operates within amino-acid biosynthesis; L-histidine biosynthesis; L-histidine from 5-phospho-alpha-D-ribose 1-diphosphate: step 4/9. This Dehalococcoides mccartyi (strain ATCC BAA-2266 / KCTC 15142 / 195) (Dehalococcoides ethenogenes (strain 195)) protein is 1-(5-phosphoribosyl)-5-[(5-phosphoribosylamino)methylideneamino] imidazole-4-carboxamide isomerase.